We begin with the raw amino-acid sequence, 347 residues long: Involucrin (347 aa).

2 disordered regions span residues 1 to 43 (MSQQ…LPAP) and 56 to 347 (PLED…RRSL). A compositionally biased stretch (polar residues) spans 27-36 (ADTQQEQVKQ). Low complexity-rich tracts occupy residues 70–114 (VPEQ…QQES) and 138–161 (DQQQ…QQES). Composition is skewed to basic and acidic residues over residues 164 to 173 (QELHVDHHQQ) and 212 to 221 (QELHVDHHQQ). 2 stretches are compositionally biased toward low complexity: residues 222-241 (QQES…QQES) and 265-285 (DQQQ…QQQE). Basic and acidic residues predominate over residues 287 to 341 (QEDHQKAEHLEQEEAQREQQLKGQLEQEKKGVYQHLDQELTKRDEHLEKKGEHCW).

The protein belongs to the involucrin family. Directly or indirectly cross-linked to cornifelin (CNFN). Substrate of transglutaminase. Specific glutamines or lysines are cross-linked to keratins, desmoplakin and to inter involucrin molecules. In terms of tissue distribution, keratinocytes of epidermis and other stratified squamous epithelia.

It localises to the cytoplasm. Functionally, part of the insoluble cornified cell envelope (CE) of stratified squamous epithelia. This chain is Involucrin (IVL), found in Sus scrofa (Pig).